A 253-amino-acid polypeptide reads, in one-letter code: 5-oxoprolinase subunit A (253 aa).

The protein belongs to the LamB/PxpA family. Forms a complex composed of PxpA, PxpB and PxpC.

The catalysed reaction is 5-oxo-L-proline + ATP + 2 H2O = L-glutamate + ADP + phosphate + H(+). Its function is as follows. Catalyzes the cleavage of 5-oxoproline to form L-glutamate coupled to the hydrolysis of ATP to ADP and inorganic phosphate. In Bacillus cereus (strain 03BB102), this protein is 5-oxoprolinase subunit A.